An 81-amino-acid chain; its full sequence is MNREGAPGKSPEEMYIQQKVRVLLMLRKMGSNLTASEEEFLRTYAGVVSSQLSQLPQHSIDQGAEDVVMAFSRSETEDRRQ.

Position 59 is a phosphoserine (serine 59).

Belongs to the CTNNBIP1 family. As to quaternary structure, binds CTNNB1. In terms of tissue distribution, highly expressed in heart, brain, liver and skeletal muscle. Detected at low levels in kidney, testis and lung.

It is found in the cytoplasm. The protein localises to the nucleus. In terms of biological role, prevents the interaction between CTNNB1 and TCF family members, and acts as a negative regulator of the Wnt signaling pathway. The polypeptide is Beta-catenin-interacting protein 1 (Ctnnbip1) (Mus musculus (Mouse)).